The following is a 108-amino-acid chain: DNA-directed RNA polymerase III subunit RPC10 (108 aa).

Residues C5, C8, C25, C28, C69, and C72 each coordinate Zn(2+). The C4-type zinc-finger motif lies at 5–28; that stretch reads CPGCGNGLIVEEGQRCHRFACNTC. The TFIIS-type zinc finger occupies 65–107; it reads TAESCPKCEHPRAYFMQLQTRSADEPMTTFYKCCNAQCGHRWR. The Hairpin motif lies at 88 to 89; sequence DE. C98 and C102 together coordinate Zn(2+).

It belongs to the archaeal RpoM/eukaryotic RPA12/RPB9/RPC11 RNA polymerase family. In terms of assembly, component of the RNA polymerase III complex consisting of 17 subunits: a ten-subunit horseshoe-shaped catalytic core composed of POLR3A/RPC1, POLR3B/RPC2, POLR1C/RPAC1, POLR1D/RPAC2, POLR3K/RPC10, POLR2E/RPABC1, POLR2F/RPABC2, POLR2H/RPABC3, POLR2K/RPABC4 and POLR2L/RPABC5; a mobile stalk composed of two subunits POLR3H/RPC8 and CRCP/RPC9, protruding from the core and functioning primarily in transcription initiation; and additional subunits homologous to general transcription factors of the RNA polymerase II machinery, POLR3C/RPC3-POLR3F/RPC6-POLR3G/RPC7 heterotrimer required for transcription initiation and POLR3D/RPC4-POLR3E/RPC5 heterodimer involved in both transcription initiation and termination.

The protein localises to the nucleus. In terms of biological role, core component of RNA polymerase III (Pol III) which synthesizes small non-coding RNAs using the four ribonucleoside triphosphates as substrates. Can mediate Pol I proofreading of the nascent RNA transcript. Anchors into the Pol III active site to constantly monitor transcription fidelity, cleaves mis-incorporated 5'-ribonucleotides and restarts the transcription process. Once Pol III reaches the poly(dT) termination signal, can induce Pol III clamp opening and transcription termination. Pol III plays an important role in sensing and limiting infection by intracellular bacteria and DNA viruses. Acts as a nuclear and cytosolic DNA sensor involved in innate immune response. Can sense non-self dsDNA that serves as template for transcription into dsRNA. The non-self RNA polymerase III transcripts, such as Epstein-Barr virus-encoded RNAs (EBERs) induce type I interferon and NF-kappa-B through the RIG-I pathway. The chain is DNA-directed RNA polymerase III subunit RPC10 from Homo sapiens (Human).